We begin with the raw amino-acid sequence, 316 residues long: Heme oxygenase 2 (316 aa).

A compositionally biased stretch (acidic residues) spans Met1–Asp12. Residues Met1–Arg29 are disordered. At Ser2 the chain carries N-acetylserine. Ser2 carries the post-translational modification Phosphoserine. Residues Glu13 to Gln27 are compositionally biased toward basic and acidic residues. Residue His45 participates in heme b binding. 2 HRM repeats span residues Lys264–Ala269 and Ser281–Thr286. Cys265 and Cys282 each carry S-nitrosocysteine.

This sequence belongs to the heme oxygenase family. S-nitrosylated by BLVRB.

The protein resides in the microsome. Its subcellular location is the endoplasmic reticulum. The enzyme catalyses heme b + 3 reduced [NADPH--hemoprotein reductase] + 3 O2 = biliverdin IXalpha + CO + Fe(2+) + 3 oxidized [NADPH--hemoprotein reductase] + 3 H2O + H(+). Heme oxygenase cleaves the heme ring at the alpha methene bridge to form biliverdin. Biliverdin is subsequently converted to bilirubin by biliverdin reductase. Under physiological conditions, the activity of heme oxygenase is highest in the spleen, where senescent erythrocytes are sequestrated and destroyed. Heme oxygenase 2 could be implicated in the production of carbon monoxide in brain where it could act as a neurotransmitter. In Macaca fascicularis (Crab-eating macaque), this protein is Heme oxygenase 2 (HMOX2).